Consider the following 417-residue polypeptide: Glutamyl-tRNA reductase (417 aa).

Substrate contacts are provided by residues 49 to 52 (TCNR), Ser105, 110 to 112 (ETQ), and Gln116. The Nucleophile role is filled by Cys50. 185-190 (GAGEMI) is an NADP(+) binding site.

Belongs to the glutamyl-tRNA reductase family. Homodimer.

It carries out the reaction (S)-4-amino-5-oxopentanoate + tRNA(Glu) + NADP(+) = L-glutamyl-tRNA(Glu) + NADPH + H(+). Its pathway is porphyrin-containing compound metabolism; protoporphyrin-IX biosynthesis; 5-aminolevulinate from L-glutamyl-tRNA(Glu): step 1/2. Functionally, catalyzes the NADPH-dependent reduction of glutamyl-tRNA(Glu) to glutamate 1-semialdehyde (GSA). This chain is Glutamyl-tRNA reductase, found in Chromobacterium violaceum (strain ATCC 12472 / DSM 30191 / JCM 1249 / CCUG 213 / NBRC 12614 / NCIMB 9131 / NCTC 9757 / MK).